Here is an 82-residue protein sequence, read N- to C-terminus: Small ribosomal subunit protein bS16 (82 aa).

Belongs to the bacterial ribosomal protein bS16 family.

This chain is Small ribosomal subunit protein bS16, found in Aeromonas salmonicida (strain A449).